Consider the following 264-residue polypeptide: H-2 class II histocompatibility antigen, E-Q beta chain (264 aa).

The N-terminal stretch at 1–26 (MVWLPRVPCVAAVILLLTVLSPPVAL) is a signal peptide. The segment at 27-121 (VRDSRPWFLE…IFDNFLVRRR (95 aa)) is beta-1. At 27–225 (VRDSRPWFLE…KAQSTSAQNK (199 aa)) the chain is on the extracellular side. Disulfide bonds link C38–C106 and C144–C200. Residue N46 is glycosylated (N-linked (GlcNAc...) asparagine). Residues 122 to 225 (VEPTVTVYPT…KAQSTSAQNK (104 aa)) form a beta-2 region. In terms of domain architecture, Ig-like C1-type spans 124 to 214 (PTVTVYPTKT…PSLTDPVTVE (91 aa)). The helical transmembrane segment at 226 to 246 (MLSGVGGFVLGLLFLGAGLFI) threads the bilayer. The Cytoplasmic segment spans residues 247–264 (YFRNQKGQSGLQPTGLLS).

Belongs to the MHC class II family.

Its subcellular location is the membrane. The protein is H-2 class II histocompatibility antigen, E-Q beta chain of Mus musculus (Mouse).